We begin with the raw amino-acid sequence, 122 residues long: Large ribosomal subunit protein uL14 (122 aa).

Belongs to the universal ribosomal protein uL14 family. As to quaternary structure, part of the 50S ribosomal subunit. Forms a cluster with proteins L3 and L19. In the 70S ribosome, L14 and L19 interact and together make contacts with the 16S rRNA in bridges B5 and B8.

Binds to 23S rRNA. Forms part of two intersubunit bridges in the 70S ribosome. This chain is Large ribosomal subunit protein uL14, found in Mycobacterium sp. (strain KMS).